The primary structure comprises 337 residues: 1-aminocyclopropane-1-carboxylate deaminase (337 aa).

Lys50 bears the N6-(pyridoxal phosphate)lysine mark. Ser77 serves as the catalytic Nucleophile.

It belongs to the ACC deaminase/D-cysteine desulfhydrase family. As to quaternary structure, homotrimer. Pyridoxal 5'-phosphate is required as a cofactor.

It carries out the reaction 1-aminocyclopropane-1-carboxylate + H2O = 2-oxobutanoate + NH4(+). In terms of biological role, catalyzes a cyclopropane ring-opening reaction, the irreversible conversion of 1-aminocyclopropane-1-carboxylate (ACC) to ammonia and alpha-ketobutyrate. Allows growth on ACC as a nitrogen source. This is 1-aminocyclopropane-1-carboxylate deaminase from Rhizobium rhizogenes (strain K84 / ATCC BAA-868) (Agrobacterium radiobacter).